The following is a 272-amino-acid chain: Phosphatidylglycerol--prolipoprotein diacylglyceryl transferase (272 aa).

Transmembrane regions (helical) follow at residues 17–37 (LQVHWYGLMYLLAFLCAWGLA), 55–75 (LVFYGALGVVLGGRIGYVLFY), 90–110 (VWTGGMSFHGGFLGVMIAMLF), 125–145 (FIAPCVPTGLMFGRIGNFIGG), 174–194 (PSQIYQALCEGLLLFIILWWF), 202–222 (MAVSALFLMGYGVARFVMEFF), and 230–250 (GFILFGWMTKGQILTVPMLLI). R138 is an a 1,2-diacyl-sn-glycero-3-phospho-(1'-sn-glycerol) binding site.

It belongs to the Lgt family.

It is found in the cell inner membrane. The catalysed reaction is L-cysteinyl-[prolipoprotein] + a 1,2-diacyl-sn-glycero-3-phospho-(1'-sn-glycerol) = an S-1,2-diacyl-sn-glyceryl-L-cysteinyl-[prolipoprotein] + sn-glycerol 1-phosphate + H(+). It participates in protein modification; lipoprotein biosynthesis (diacylglyceryl transfer). Functionally, catalyzes the transfer of the diacylglyceryl group from phosphatidylglycerol to the sulfhydryl group of the N-terminal cysteine of a prolipoprotein, the first step in the formation of mature lipoproteins. This is Phosphatidylglycerol--prolipoprotein diacylglyceryl transferase from Acinetobacter baumannii (strain ACICU).